A 1465-amino-acid chain; its full sequence is DNA polymerase III PolC-type (1465 aa).

The 153-residue stretch at 431–583 (DVETTGLSAM…YDAEATGRLL (153 aa)) folds into the Exonuclease domain.

It belongs to the DNA polymerase type-C family. PolC subfamily.

The protein localises to the cytoplasm. It catalyses the reaction DNA(n) + a 2'-deoxyribonucleoside 5'-triphosphate = DNA(n+1) + diphosphate. Functionally, required for replicative DNA synthesis. This DNA polymerase also exhibits 3' to 5' exonuclease activity. This is DNA polymerase III PolC-type from Streptococcus pyogenes.